A 397-amino-acid chain; its full sequence is Phosphopentomutase (397 aa).

The Mn(2+) site is built by Asp-10, Asp-296, His-301, Asp-337, His-338, and His-349.

It belongs to the phosphopentomutase family. Requires Mn(2+) as cofactor.

It is found in the cytoplasm. It catalyses the reaction 2-deoxy-alpha-D-ribose 1-phosphate = 2-deoxy-D-ribose 5-phosphate. It carries out the reaction alpha-D-ribose 1-phosphate = D-ribose 5-phosphate. It participates in carbohydrate degradation; 2-deoxy-D-ribose 1-phosphate degradation; D-glyceraldehyde 3-phosphate and acetaldehyde from 2-deoxy-alpha-D-ribose 1-phosphate: step 1/2. Its function is as follows. Isomerase that catalyzes the conversion of deoxy-ribose 1-phosphate (dRib-1-P) and ribose 1-phosphate (Rib-1-P) to deoxy-ribose 5-phosphate (dRib-5-P) and ribose 5-phosphate (Rib-5-P), respectively. The protein is Phosphopentomutase of Elusimicrobium minutum (strain Pei191).